Reading from the N-terminus, the 360-residue chain is Phenylalanine--tRNA ligase alpha subunit (360 aa).

Glu264 provides a ligand contact to Mg(2+).

The protein belongs to the class-II aminoacyl-tRNA synthetase family. Phe-tRNA synthetase alpha subunit type 1 subfamily. In terms of assembly, tetramer of two alpha and two beta subunits. Requires Mg(2+) as cofactor.

The protein localises to the cytoplasm. It carries out the reaction tRNA(Phe) + L-phenylalanine + ATP = L-phenylalanyl-tRNA(Phe) + AMP + diphosphate + H(+). This chain is Phenylalanine--tRNA ligase alpha subunit, found in Streptomyces avermitilis (strain ATCC 31267 / DSM 46492 / JCM 5070 / NBRC 14893 / NCIMB 12804 / NRRL 8165 / MA-4680).